The chain runs to 340 residues: Alcohol dehydrogenase (340 aa).

7 residues coordinate Zn(2+): C37, H58, C89, C92, C95, C103, and C145.

This sequence belongs to the zinc-containing alcohol dehydrogenase family. It depends on Zn(2+) as a cofactor.

The enzyme catalyses a primary alcohol + NAD(+) = an aldehyde + NADH + H(+). The catalysed reaction is a secondary alcohol + NAD(+) = a ketone + NADH + H(+). The protein is Alcohol dehydrogenase (adh) of Staphylococcus epidermidis (strain ATCC 35984 / DSM 28319 / BCRC 17069 / CCUG 31568 / BM 3577 / RP62A).